The primary structure comprises 195 residues: Cysteine/O-acetylserine efflux protein (195 aa).

Over 1–7 (MTPTLLS) the chain is Periplasmic. Residues 8 to 28 (AFWTYTLITAMTPGPNNILAL) traverse the membrane as a helical segment. Over 29–46 (SSATTHGFHQSTRVLAGM) the chain is Cytoplasmic. A helical membrane pass occupies residues 47-67 (SLGFLIVMLLCAGISFSLAVI). Residues 68-69 (DP) are Periplasmic-facing. Residues 70-90 (AAVHLLSWAGAAYIVWLAWKI) traverse the membrane as a helical segment. Residues 91–104 (ATSPTKEDGLQTKP) are Cytoplasmic-facing. The helical transmembrane segment at 105 to 125 (ISFWASFALQFVNVKIILYGV) threads the bilayer. Topologically, residues 126–141 (TALSTFVLPQTQALSW) are periplasmic. Residues 142-162 (IVGVSVLLAMIGTFGNVCWAL) form a helical membrane-spanning segment. The Cytoplasmic segment spans residues 163-176 (AGHLFQRLFRQYGR). A helical membrane pass occupies residues 177–194 (QLNIVLALLLIYCAVRIF). Tyr-195 is a topological domain (periplasmic).

This sequence belongs to the Rht family.

The protein resides in the cell inner membrane. The catalysed reaction is O-acetyl-L-serine(in) = O-acetyl-L-serine(out). It catalyses the reaction L-cysteine(in) = L-cysteine(out). In terms of biological role, exporter of O-acetylserine (OAS) and cysteine. In Escherichia coli O157:H7, this protein is Cysteine/O-acetylserine efflux protein (eamB).